Consider the following 906-residue polypeptide: Catenin alpha-1 (906 aa).

Thr-2 is modified (N-acetylthreonine). Positions 2–228 are involved in homodimerization; the sequence is TAVHTGNINF…PILYTASQAC (227 aa). A Glycyl lysine isopeptide (Lys-Gly) (interchain with G-Cter in SUMO2) cross-link involves residue Lys-57. The tract at residues 97-148 is interaction with JUP and CTNNB1; the sequence is VRKQCDLMKSAAGEFADDPCSSVKRGNMVRAARALLSAVTRLLILADMADVY. Ser-264, Ser-268, Ser-295, and Ser-297 each carry phosphoserine. Residues 325 to 394 are interaction with alpha-actinin; that stretch reads TRDDRRERIV…AVMDHVSDSF (70 aa). Position 634 is a phosphothreonine (Thr-634). The residue at position 641 (Ser-641) is a Phosphoserine. Phosphothreonine is present on Thr-645. Phosphoserine is present on residues Ser-652 and Ser-655. The residue at position 658 (Thr-658) is a Phosphothreonine. Lys-797 participates in a covalent cross-link: Glycyl lysine isopeptide (Lys-Gly) (interchain with G-Cter in SUMO2). At Ser-851 the chain carries Phosphoserine. Over residues 864–880 the composition is skewed to basic and acidic residues; the sequence is PEKKPLVKREKQDETQT. The segment at 864-894 is disordered; sequence PEKKPLVKREKQDETQTKIKRASQKKHVNPV. Basic residues predominate over residues 881–891; sequence KIKRASQKKHV.

Belongs to the vinculin/alpha-catenin family. In terms of assembly, monomer and homodimer; the monomer preferentially binds to CTNNB1 and the homodimer to actin. Component of an cadherin:catenin adhesion complex composed of at least of CDH26, beta-catenin/CTNNB1, alpha-catenin/CTNNA1 and p120 catenin/CTNND1. Possible component of an E-cadherin/ catenin adhesion complex together with E-cadherin/CDH1 and beta-catenin/CTNNB1 or gamma-catenin/JUP; the complex is located to adherens junctions. The stable association of CTNNA1 is controversial as CTNNA1 was shown not to bind to F-actin when assembled in the complex. Alternatively, the CTNNA1-containing complex may be linked to F-actin by other proteins such as LIMA1. Binds AFDN and F-actin. Interacts with ARHGAP21. Interacts with AJUBA. Interacts with LIMA1. Interacts with vinculin/VCL. Interacts with TJP2/ZO2 (via N-terminus). Interacts with TJP1/ZO1 (via N-terminus). In terms of processing, sumoylated. Phosphorylation seems to contribute to the strength of cell-cell adhesion rather than to the basic capacity for cell-cell adhesion.

It is found in the cytoplasm. The protein resides in the cytoskeleton. It localises to the cell junction. Its subcellular location is the adherens junction. The protein localises to the cell membrane. It is found in the nucleus. Functionally, associates with the cytoplasmic domain of a variety of cadherins. The association of catenins to cadherins produces a complex which is linked to the actin filament network, and which seems to be of primary importance for cadherins cell-adhesion properties. Can associate with both E- and N-cadherins. Originally believed to be a stable component of E-cadherin/catenin adhesion complexes and to mediate the linkage of cadherins to the actin cytoskeleton at adherens junctions. In contrast, cortical actin was found to be much more dynamic than E-cadherin/catenin complexes and CTNNA1 was shown not to bind to F-actin when assembled in the complex suggesting a different linkage between actin and adherens junctions components. The homodimeric form may regulate actin filament assembly and inhibit actin branching by competing with the Arp2/3 complex for binding to actin filaments. Involved in the regulation of WWTR1/TAZ, YAP1 and TGFB1-dependent SMAD2 and SMAD3 nuclear accumulation. May play a crucial role in cell differentiation. In Bos taurus (Bovine), this protein is Catenin alpha-1.